Consider the following 443-residue polypeptide: Phosphoglucosamine mutase (443 aa).

Ser101 functions as the Phosphoserine intermediate in the catalytic mechanism. Mg(2+) contacts are provided by Ser101, Asp239, Asp241, and Asp243. Ser101 is subject to Phosphoserine.

Belongs to the phosphohexose mutase family. Mg(2+) is required as a cofactor. Post-translationally, activated by phosphorylation.

The catalysed reaction is alpha-D-glucosamine 1-phosphate = D-glucosamine 6-phosphate. Functionally, catalyzes the conversion of glucosamine-6-phosphate to glucosamine-1-phosphate. This Francisella tularensis subsp. tularensis (strain WY96-3418) protein is Phosphoglucosamine mutase.